The primary structure comprises 377 residues: Succinyl-diaminopimelate desuccinylase (377 aa).

Position 68 (histidine 68) interacts with Zn(2+). Aspartate 70 is a catalytic residue. Aspartate 101 contributes to the Zn(2+) binding site. The Proton acceptor role is filled by glutamate 135. Glutamate 136, glutamate 164, and histidine 350 together coordinate Zn(2+).

It belongs to the peptidase M20A family. DapE subfamily. In terms of assembly, homodimer. Zn(2+) is required as a cofactor. It depends on Co(2+) as a cofactor.

The enzyme catalyses N-succinyl-(2S,6S)-2,6-diaminopimelate + H2O = (2S,6S)-2,6-diaminopimelate + succinate. It participates in amino-acid biosynthesis; L-lysine biosynthesis via DAP pathway; LL-2,6-diaminopimelate from (S)-tetrahydrodipicolinate (succinylase route): step 3/3. In terms of biological role, catalyzes the hydrolysis of N-succinyl-L,L-diaminopimelic acid (SDAP), forming succinate and LL-2,6-diaminopimelate (DAP), an intermediate involved in the bacterial biosynthesis of lysine and meso-diaminopimelic acid, an essential component of bacterial cell walls. The protein is Succinyl-diaminopimelate desuccinylase of Vibrio vulnificus (strain CMCP6).